We begin with the raw amino-acid sequence, 216 residues long: Adenylate kinase (216 aa).

10–15 (GAGKGT) contacts ATP. The interval 30–59 (STGDMFRAAMKAETEMGLQAKSFIDKGALV) is NMP. AMP contacts are provided by residues Thr31, Arg36, 57–59 (ALV), 85–88 (GFPR), and Gln92. The tract at residues 126 to 163 (GRRICKECGATYHLEFNPPAKADVCDKCGGELYQRSDD) is LID. Residue Arg127 coordinates ATP. Zn(2+) is bound by residues Cys130 and Cys133. 136 to 137 (TY) is an ATP binding site. Cys150 and Cys153 together coordinate Zn(2+). The AMP site is built by Arg160 and Arg171. Gln199 lines the ATP pocket.

This sequence belongs to the adenylate kinase family. As to quaternary structure, monomer.

It is found in the cytoplasm. The catalysed reaction is AMP + ATP = 2 ADP. The protein operates within purine metabolism; AMP biosynthesis via salvage pathway; AMP from ADP: step 1/1. Its function is as follows. Catalyzes the reversible transfer of the terminal phosphate group between ATP and AMP. Plays an important role in cellular energy homeostasis and in adenine nucleotide metabolism. The polypeptide is Adenylate kinase (Bacillus cereus (strain ATCC 10987 / NRS 248)).